A 268-amino-acid chain; its full sequence is Non-homologous end joining protein Ku (268 aa).

Residues 13 to 175 (VSLVTCPVTM…TLHDGNAVRN (163 aa)) form the Ku domain. Positions 174-194 (RNGGHPAARTRPASEAESADS) are disordered.

This sequence belongs to the prokaryotic Ku family. In terms of assembly, homodimer. Interacts with LigD.

With LigD forms a non-homologous end joining (NHEJ) DNA repair enzyme, which repairs dsDNA breaks with reduced fidelity. Binds linear dsDNA with 5'- and 3'- overhangs but not closed circular dsDNA nor ssDNA. Recruits and stimulates the ligase activity of LigD. This is Non-homologous end joining protein Ku from Gluconacetobacter diazotrophicus (strain ATCC 49037 / DSM 5601 / CCUG 37298 / CIP 103539 / LMG 7603 / PAl5).